A 690-amino-acid chain; its full sequence is Elongation factor G (690 aa).

Residues glutamate 8–leucine 283 form the tr-type G domain. GTP contacts are provided by residues alanine 17 to threonine 24, aspartate 81 to histidine 85, and asparagine 135 to aspartate 138.

Belongs to the TRAFAC class translation factor GTPase superfamily. Classic translation factor GTPase family. EF-G/EF-2 subfamily.

It localises to the cytoplasm. In terms of biological role, catalyzes the GTP-dependent ribosomal translocation step during translation elongation. During this step, the ribosome changes from the pre-translocational (PRE) to the post-translocational (POST) state as the newly formed A-site-bound peptidyl-tRNA and P-site-bound deacylated tRNA move to the P and E sites, respectively. Catalyzes the coordinated movement of the two tRNA molecules, the mRNA and conformational changes in the ribosome. The chain is Elongation factor G from Nitrobacter hamburgensis (strain DSM 10229 / NCIMB 13809 / X14).